A 105-amino-acid polypeptide reads, in one-letter code: Flower-specific defensin (105 aa).

Residues 1 to 25 form the signal peptide; that stretch reads MARSLCFMAFAILAMMLFVAYEVQA. 4 cysteine pairs are disulfide-bonded: C28–C72, C39–C59, C45–C66, and C49–C68. Positions 73–105 are cleaved as a propeptide — removed in mature form; sequence VFDEKMTKTGAEILAEEAKTLAAALLEEEIMDN.

Belongs to the DEFL family. As to expression, most abundant in the epidermal cell layers of the petals and sepals, within the connective cells of the anthers, and the cortical cells of the style. Not detected in the tapetum, pollen mother cells, the transmitting tissue, the vascular bundles of the anther and style or in leaves. Expressed also in ovaries, but barley detectable in roots.

The protein localises to the secreted. It is found in the vacuole. Plant defense peptide with antifungal activity against F.oxysporum and B.cinerea. Retards the growth of the Lepidopteran insect pests H.armigera and H.punctigera. The protein is Flower-specific defensin (D1) of Nicotiana alata (Winged tobacco).